Reading from the N-terminus, the 570-residue chain is Methionine--tRNA ligase (570 aa).

Positions 14-24 match the 'HIGH' region motif; the sequence is PYINGIKHLGN. 4 residues coordinate Zn(2+): Cys146, Cys149, Cys159, and Cys162. A 'KMSKS' region motif is present at residues 347-351; that stretch reads QFSTS. Thr350 is a binding site for ATP.

This sequence belongs to the class-I aminoacyl-tRNA synthetase family. MetG type 1 subfamily. In terms of assembly, monomer. The cofactor is Zn(2+).

Its subcellular location is the cytoplasm. It carries out the reaction tRNA(Met) + L-methionine + ATP = L-methionyl-tRNA(Met) + AMP + diphosphate. In terms of biological role, is required not only for elongation of protein synthesis but also for the initiation of all mRNA translation through initiator tRNA(fMet) aminoacylation. The chain is Methionine--tRNA ligase from Jannaschia sp. (strain CCS1).